A 91-amino-acid polypeptide reads, in one-letter code: CLAVATA3/ESR (CLE)-related protein 27 (91 aa).

Residues 1–35 form the signal peptide; sequence MTHAREWRSSLTTTLLMVILLSYMLHLFCVYSRVG. 2 positions are modified to hydroxyproline: Pro83 and Pro86. O-linked (Ara...) hydroxyproline glycosylation is present at Pro86.

Belongs to the CLV3/ESR signal peptide family. In terms of processing, the O-glycosylation (arabinosylation) of the hydroxyproline Pro-86 enhances binding affinity of the CLE27p peptide for its receptor. In terms of tissue distribution, mostly expressed in apex, and, to a lower extent, in roots, leaves, flowers and siliques.

Its subcellular location is the secreted. The protein localises to the extracellular space. Extracellular signal peptide that regulates cell fate. Represses root apical meristem maintenance. In Arabidopsis thaliana (Mouse-ear cress), this protein is CLAVATA3/ESR (CLE)-related protein 27.